The sequence spans 334 residues: MIDPRLPLTDIHRHLDGNIRAQTILDLGQQFNLNLPANELDTLRPHVQITKTEPDLVSFLQKLDWGVAVLGSLDACRRVAYENVEDAAHAGLHYAELRFSPFYMAMKHQLPITGVVEAVIDGIASGCRDFNIDIRLIGILSRTFGEQACLQELDSLLAHREGITALDLAGDELGFPGSLFRRHFNRARDAGLRITVHAGEAAGPESIWQAIRELGAERIGHGVKAVEDRKLMDYLAEHKIGIESCLTSNIQTSTVVSLATHPLATFLRHGIVASINTDDPAVQGIEIANEYLVAAPAAGLTPHEIRQAQANGLEMAFISEQEKQALRDKVFPIS.

2 residues coordinate Zn(2+): His-12 and His-14. His-14, Asp-16, and Gly-170 together coordinate substrate. Position 197 (His-197) interacts with Zn(2+). The active-site Proton donor is Glu-200. Asp-278 lines the Zn(2+) pocket. Asp-279 contributes to the substrate binding site.

This sequence belongs to the metallo-dependent hydrolases superfamily. Adenosine and AMP deaminases family. Adenosine deaminase subfamily. Requires Zn(2+) as cofactor.

It carries out the reaction adenosine + H2O + H(+) = inosine + NH4(+). The enzyme catalyses 2'-deoxyadenosine + H2O + H(+) = 2'-deoxyinosine + NH4(+). In terms of biological role, catalyzes the hydrolytic deamination of adenosine and 2-deoxyadenosine. This is Adenosine deaminase from Yersinia pseudotuberculosis serotype IB (strain PB1/+).